The following is a 400-amino-acid chain: Endophilin-B2 (400 aa).

Methionine 1 is modified (N-acetylmethionine). A membrane-binding amphipathic helix region spans residues 1-27; sequence MDFNMKKLASDAGIFFTRAVQFTEEKF. Serine 10 carries the post-translational modification Phosphoserine. One can recognise a BAR domain in the interval 24–287; that stretch reads EEKFGQAEKT…LGSSQGAIFP (264 aa). Residues 205–234 adopt a coiled-coil conformation; the sequence is SASALWNDEVDKAEQELRVAQTEFDRQAEV. In terms of domain architecture, SH3 spans 340–400; it reads SGTRKARVLY…VPVTYLELLS (61 aa). The residue at position 400 (serine 400) is a Phosphoserine.

This sequence belongs to the endophilin family. As to quaternary structure, homodimer, and heterodimer with SH3GLB1.

It is found in the cytoplasm. This chain is Endophilin-B2 (Sh3glb2), found in Mus musculus (Mouse).